An 857-amino-acid chain; its full sequence is Protein app1 (857 aa).

The ADF-H domain maps to 6–133 (DTSTHGAEIR…NMDDIIRRVA (128 aa)). 3 disordered regions span residues 167–562 (AKVA…VPQR), 585–622 (EVPSVPQPPVAPVVPEAPSVPQPPVAPVAPEVPSVPQR), and 693–723 (QLNEPVVPPLPPHDETQEPQVGGDVKATEHT). The segment covering 193-204 (KDSKDNSWDDSS) has biased composition (basic and acidic residues). Low complexity predominate over residues 205 to 217 (KQSNTQTANTTSN). Basic and acidic residues predominate over residues 229–240 (AGRKEKSQENKP). 5 stretches are compositionally biased toward polar residues: residues 276-295 (SISTTTTGSSYRSAESSHAP), 371-385 (PPASTTASKQDSPST), 399-409 (KQVSSNETSAQ), 443-452 (KISSFNSKAG), and 498-511 (SSASQKAAQPSVIT). Residues 522–561 (VVPEAPSVHQPPAAPVAPEVPSAPQRPAAPVVPEAPSVPQ) are compositionally biased toward low complexity. Pro residues-rich tracts occupy residues 587–596 (PSVPQPPVAP) and 602–611 (PSVPQPPVAP). Over residues 612–622 (VAPEVPSVPQR) the composition is skewed to low complexity. SH3 domains are found at residues 725 to 785 (PTKT…ITGP) and 800 to 857 (GPGK…VEEI).

In Schizosaccharomyces pombe (strain 972 / ATCC 24843) (Fission yeast), this protein is Protein app1 (app1).